Reading from the N-terminus, the 297-residue chain is Acetylglutamate kinase (297 aa).

Residues 72–73 (GG), arginine 94, and asparagine 187 contribute to the substrate site.

It belongs to the acetylglutamate kinase family. ArgB subfamily.

The protein localises to the cytoplasm. It carries out the reaction N-acetyl-L-glutamate + ATP = N-acetyl-L-glutamyl 5-phosphate + ADP. Its pathway is amino-acid biosynthesis; L-arginine biosynthesis; N(2)-acetyl-L-ornithine from L-glutamate: step 2/4. Its function is as follows. Catalyzes the ATP-dependent phosphorylation of N-acetyl-L-glutamate. The polypeptide is Acetylglutamate kinase (Synechocystis sp. (strain ATCC 27184 / PCC 6803 / Kazusa)).